The primary structure comprises 1073 residues: TSC22 domain family protein 1 (1073 aa).

The interval 1–98 (MHQPPESTAA…SQAQLQAQPL (98 aa)) is required for interaction with TGFBR1 and promotion of TGF-beta signaling. Disordered regions lie at residues 22–110 (MAHP…KKSG), 125–205 (ISSN…PHLP), 220–288 (LHHH…SPAS), 458–486 (VTSE…SVGS), 607–628 (YSQA…QQLQ), and 742–766 (VQQP…QVVP). Positions 36–45 (GSASALNAAG) are enriched in low complexity. The span at 58–70 (FPPPSLLQPPPPA) shows a compositional bias: pro residues. The segment covering 84–100 (SLNLLSQAQLQAQPLAP) has biased composition (low complexity). The segment covering 133–142 (EDTESYDDLD) has biased composition (acidic residues). Basic residues predominate over residues 220 to 240 (LHHHHQIHHGHHLQHGHHHPS). Residues 257–271 (PVSRKLSTTGSSDSI) show a composition bias toward polar residues. The residue at position 263 (S263) is a Phosphoserine. Composition is skewed to low complexity over residues 272–288 (TPVA…SPAS) and 465–483 (TSGS…YTES). The span at 614–625 (VQTPLPGAPPPQ) shows a compositional bias: pro residues. Residues 742–764 (VQQPSTQVPPSVIQQGAPPSSQV) are compositionally biased toward polar residues. The leucine-zipper stretch occupies residues 1006-1027 (LKEQIKELIEKNSQLEQENNLL). The disordered stretch occupies residues 1037–1073 (AQFQAQLQTGSPPATTQPQGTTQPPAQPASQGSGPTA). A compositionally biased stretch (low complexity) spans 1044 to 1073 (QTGSPPATTQPQGTTQPPAQPASQGSGPTA).

It belongs to the TSC-22/Dip/Bun family. In terms of assembly, forms homodimers. Forms heterodimers. Component of a complex composed of TSC22D1 (via N-terminus), TGFBR1 and TGFBR2; the interaction between TSC22D1 and TGFBR1 is inhibited by SMAD7 and promoted by TGFB1. Interacts with SMAD7; the interaction requires TGF-beta and the interaction is inhibited by TGFBR1. Interacts with TPT1/fortilin; interaction results in the destabilization of TSC22D1 protein and prevents TSC22D1-mediated apoptosis. Interacts with SMAD4 (via N-terminus). Interacts with ACVRL1/ALK1, ACVR1/ALK2, BMPR1A/ALK3, ACVR1B/ALK4, BMPR1B/ALK6, ACVR2A/ACTRII, and BMPR2. Interacts with SMAD6. Interacts with TFE3; the interaction is enhanced in the presence of TGF-beta. As to quaternary structure, forms a heterodimer with TSC22D4/THG1. Forms a heterodimer with TSC22D4/THG1. Interacts with histone H1-2. Interacts with GNL3. In terms of assembly, interacts with histone H1-2. In terms of tissue distribution, ubiquitously expressed in adult tissues. Expressed in the postmitotic epithelial compartment at the top of intestinal mucosal villi.

The protein localises to the cytoplasm. Its subcellular location is the nucleus. It is found in the cell membrane. The protein resides in the mitochondrion. Its function is as follows. Transcriptional repressor. Acts on the C-type natriuretic peptide (CNP) promoter. Acts to promote CASP3-mediated apoptosis. Positively regulates TGF-beta signaling by interacting with SMAD7 which inhibits binding of SMAD7 to TGFBR1, preventing recruitment of SMURF ubiquitin ligases to TGFBR1 and inhibiting SMURF-mediated ubiquitination and degradation of TGFBR1. Contributes to enhancement of TGF-beta signaling by binding to and modulating the transcription activator activity of SMAD4. Promotes TGF-beta-induced transcription of COL1A2; via its interaction with TFE3 at E-boxes in the gene proximal promoter. Plays a role in the repression of hematopoietic precursor cell growth. Promotes IL2 deprivation-induced apoptosis in T-lymphocytes, via repression of TSC22D3/GILZ transcription and activation of the caspase cascade. Functionally, may act to negatively regulate TGFB3 signaling and thereby inhibit cell death in mammary gland cells. Positively regulates cell death in response to TGFB3 during mammary gland involution. This chain is TSC22 domain family protein 1, found in Homo sapiens (Human).